A 325-amino-acid chain; its full sequence is MADKVQTTLLFLAVGEFSVGILGNAFIGLVNCMDWVKKRKIASIDLILTSLAISRICLLCVILLDCFILVLYPDVYATGKEMRIIDFFWTLTNHLSIWFATCLSIYYFFRIANFFHPLFLWMKWRIDRVISWILLGCVVLSVFISLPATENLNADFRFCVKAKRKTNLTWSCRVNKTQHASTKLFLNLATLLPFCVCLMSFFLLILSLRRHIRRMQLSATGCRDPSTEAHVRALKAVISFLLLFIAYYLSFLVATSSYFMPETELAVIFGESIALIYPSSHSFILILGNNKLRHASLKVIWKVMSILKGRKFQQHKQIGRETMLF.

The Extracellular portion of the chain corresponds to 1–9 (MADKVQTTL). The chain crosses the membrane as a helical span at residues 10 to 30 (LFLAVGEFSVGILGNAFIGLV). At 31-55 (NCMDWVKKRKIASIDLILTSLAISR) the chain is on the cytoplasmic side. Residues 56–76 (ICLLCVILLDCFILVLYPDVY) form a helical membrane-spanning segment. Over 77 to 94 (ATGKEMRIIDFFWTLTNH) the chain is Extracellular. The helical transmembrane segment at 95 to 115 (LSIWFATCLSIYYFFRIANFF) threads the bilayer. Residues 116–128 (HPLFLWMKWRIDR) lie on the Cytoplasmic side of the membrane. A helical transmembrane segment spans residues 129 to 149 (VISWILLGCVVLSVFISLPAT). Over 150–187 (ENLNADFRFCVKAKRKTNLTWSCRVNKTQHASTKLFLN) the chain is Extracellular. N-linked (GlcNAc...) asparagine glycans are attached at residues N167 and N175. The helical transmembrane segment at 188-208 (LATLLPFCVCLMSFFLLILSL) threads the bilayer. The Cytoplasmic segment spans residues 209-235 (RRHIRRMQLSATGCRDPSTEAHVRALK). The chain crosses the membrane as a helical span at residues 236–256 (AVISFLLLFIAYYLSFLVATS). At 257–266 (SYFMPETELA) the chain is on the extracellular side. Residues 267–287 (VIFGESIALIYPSSHSFILIL) form a helical membrane-spanning segment. Residues 288 to 319 (GNNKLRHASLKVIWKVMSILKGRKFQQHKQIG) are Cytoplasmic-facing.

This sequence belongs to the G-protein coupled receptor T2R family.

It localises to the membrane. Its function is as follows. Gustducin-coupled receptor implicated in the perception of bitter compounds in the oral cavity and the gastrointestinal tract. Signals through PLCB2 and the calcium-regulated cation channel TRPM5. The protein is Taste receptor type 2 member 7 (TAS2R7) of Pan paniscus (Pygmy chimpanzee).